We begin with the raw amino-acid sequence, 769 residues long: Endonuclease MutS2 (769 aa).

335–342 (GGNAGGKT) is an ATP binding site. The Smr domain occupies 694 to 769 (IDLRGKRADV…GDGMTEVELV (76 aa)).

The protein belongs to the DNA mismatch repair MutS family. MutS2 subfamily. As to quaternary structure, homodimer. Binds to stalled ribosomes, contacting rRNA.

Functionally, endonuclease that is involved in the suppression of homologous recombination and thus may have a key role in the control of bacterial genetic diversity. Its function is as follows. Acts as a ribosome collision sensor, splitting the ribosome into its 2 subunits. Detects stalled/collided 70S ribosomes which it binds and splits by an ATP-hydrolysis driven conformational change. Acts upstream of the ribosome quality control system (RQC), a ribosome-associated complex that mediates the extraction of incompletely synthesized nascent chains from stalled ribosomes and their subsequent degradation. Probably generates substrates for RQC. The protein is Endonuclease MutS2 of Maridesulfovibrio salexigens (strain ATCC 14822 / DSM 2638 / NCIMB 8403 / VKM B-1763) (Desulfovibrio salexigens).